Here is a 124-residue protein sequence, read N- to C-terminus: Ribosome-binding factor A (124 aa).

Belongs to the RbfA family. As to quaternary structure, monomer. Binds 30S ribosomal subunits, but not 50S ribosomal subunits or 70S ribosomes.

It is found in the cytoplasm. Functionally, one of several proteins that assist in the late maturation steps of the functional core of the 30S ribosomal subunit. Associates with free 30S ribosomal subunits (but not with 30S subunits that are part of 70S ribosomes or polysomes). Required for efficient processing of 16S rRNA. May interact with the 5'-terminal helix region of 16S rRNA. This chain is Ribosome-binding factor A, found in Buchnera aphidicola subsp. Schizaphis graminum (strain Sg).